Here is a 307-residue protein sequence, read N- to C-terminus: DNA damage tolerance protein rad31 (307 aa).

Its function is as follows. Could be involved in a ubiquitin-related process important for DNA damage tolerance. Acts in a process which is defective in the checkpoint rad mutants and which involves hus5. The chain is DNA damage tolerance protein rad31 (rad31) from Schizosaccharomyces pombe (strain 972 / ATCC 24843) (Fission yeast).